The primary structure comprises 184 residues: Shikimate kinase (184 aa).

20 to 25 (GVGKSR) is an ATP binding site. Ser24 is a Mg(2+) binding site. 3 residues coordinate substrate: Asp42, Arg66, and Gly88. Arg127 provides a ligand contact to ATP. Arg146 lines the substrate pocket. Arg162 is a binding site for ATP.

This sequence belongs to the shikimate kinase family. As to quaternary structure, monomer. Mg(2+) is required as a cofactor.

Its subcellular location is the cytoplasm. It catalyses the reaction shikimate + ATP = 3-phosphoshikimate + ADP + H(+). It participates in metabolic intermediate biosynthesis; chorismate biosynthesis; chorismate from D-erythrose 4-phosphate and phosphoenolpyruvate: step 5/7. Functionally, catalyzes the specific phosphorylation of the 3-hydroxyl group of shikimic acid using ATP as a cosubstrate. In Thermus thermophilus (strain ATCC BAA-163 / DSM 7039 / HB27), this protein is Shikimate kinase.